Consider the following 305-residue polypeptide: Aspartate carbamoyltransferase catalytic subunit (305 aa).

Residues Arg-58 and Thr-59 each coordinate carbamoyl phosphate. Lys-86 lines the L-aspartate pocket. Residues Arg-108, His-136, and Gln-139 each contribute to the carbamoyl phosphate site. L-aspartate-binding residues include Arg-169 and Arg-223. 2 residues coordinate carbamoyl phosphate: Gly-264 and Pro-265.

It belongs to the aspartate/ornithine carbamoyltransferase superfamily. ATCase family. As to quaternary structure, heterododecamer (2C3:3R2) of six catalytic PyrB chains organized as two trimers (C3), and six regulatory PyrI chains organized as three dimers (R2).

The catalysed reaction is carbamoyl phosphate + L-aspartate = N-carbamoyl-L-aspartate + phosphate + H(+). The protein operates within pyrimidine metabolism; UMP biosynthesis via de novo pathway; (S)-dihydroorotate from bicarbonate: step 2/3. Functionally, catalyzes the condensation of carbamoyl phosphate and aspartate to form carbamoyl aspartate and inorganic phosphate, the committed step in the de novo pyrimidine nucleotide biosynthesis pathway. This chain is Aspartate carbamoyltransferase catalytic subunit, found in Syntrophobacter fumaroxidans (strain DSM 10017 / MPOB).